The primary structure comprises 200 residues: ATP-dependent Clp protease proteolytic subunit 2 (200 aa).

The Nucleophile role is filled by Ser100.

This sequence belongs to the peptidase S14 family. In terms of assembly, fourteen ClpP subunits assemble into 2 heptameric rings which stack back to back to give a disk-like structure with a central cavity, resembling the structure of eukaryotic proteasomes.

It is found in the cytoplasm. The enzyme catalyses Hydrolysis of proteins to small peptides in the presence of ATP and magnesium. alpha-casein is the usual test substrate. In the absence of ATP, only oligopeptides shorter than five residues are hydrolyzed (such as succinyl-Leu-Tyr-|-NHMec, and Leu-Tyr-Leu-|-Tyr-Trp, in which cleavage of the -Tyr-|-Leu- and -Tyr-|-Trp bonds also occurs).. Functionally, cleaves peptides in various proteins in a process that requires ATP hydrolysis. Has a chymotrypsin-like activity. Plays a major role in the degradation of misfolded proteins. The chain is ATP-dependent Clp protease proteolytic subunit 2 from Streptomyces avermitilis (strain ATCC 31267 / DSM 46492 / JCM 5070 / NBRC 14893 / NCIMB 12804 / NRRL 8165 / MA-4680).